A 583-amino-acid chain; its full sequence is Probable GTP diphosphokinase CRSH, chloroplastic (583 aa).

A chloroplast-targeting transit peptide spans 1 to 58; it reads MSVIRPSPIPIPRCRSQVLHRRLYSIQLIQRRRRRWNPRSEVEDTAIESTARSPEAAG. In terms of domain architecture, HD spans 112 to 212; it reads PLSKALSLSI…MDLVSKLDEM (101 aa). EF-hand domains are found at residues 470–505 and 507–539; these read TTTN…LGAP and EDAE…VEFM. Asp483, Asn485, Asp487, Met489, Glu494, Asp517, Asn519, Asp521, Ser523, and Glu528 together coordinate Ca(2+).

This sequence belongs to the RelA/SpoT family. As to expression, expressed in shoots, cotyledons, rosette and cauline leaves, stems, sepals, pistils and siliques.

The protein resides in the plastid. Its subcellular location is the chloroplast. The enzyme catalyses GTP + ATP = guanosine 3'-diphosphate 5'-triphosphate + AMP. With respect to regulation, activated by calcium. Functionally, possesses calcium-dependent ppGpp (guanosine 3'-diphosphate 5'-diphosphate) synthetase activity in vitro and is able to functionally complement E.coli relA mutants. Plays an important role in the timing adjustment of pistil and pollen maturation required for successful pollination. May be involved in a rapid plant ppGpp-mediated response to pathogens and other stresses. This chain is Probable GTP diphosphokinase CRSH, chloroplastic (CRSH), found in Arabidopsis thaliana (Mouse-ear cress).